The following is a 98-amino-acid chain: C-X-C motif chemokine 10 (98 aa).

The signal sequence occupies residues 1–21 (MNPSAAVIFCLILLGLSGTQG). A Citrulline modification is found at R26. 2 disulfide bridges follow: C30–C57 and C32–C74.

This sequence belongs to the intercrine alpha (chemokine CxC) family. Monomer, dimer, and tetramer. Interacts with CXCR3 (via N-terminus). In terms of tissue distribution, expressed in the spleen, thymus, lymph nodes and liver. Expressed in astrocytes, microglia, and neurons.

The protein localises to the secreted. Pro-inflammatory cytokine that is involved in a wide variety of processes such as chemotaxis, differentiation, and activation of peripheral immune cells, regulation of cell growth, apoptosis and modulation of angiostatic effects. Plays thereby an important role during viral infections by stimulating the activation and migration of immune cells to the infected sites. Mechanistically, binding of CXCL10 to the CXCR3 receptor activates G protein-mediated signaling and results in downstream activation of phospholipase C-dependent pathway, an increase in intracellular calcium production and actin reorganization. In turn, recruitment of activated Th1 lymphocytes occurs at sites of inflammation. Activation of the CXCL10/CXCR3 axis also plays an important role in neurons in response to brain injury for activating microglia, the resident macrophage population of the central nervous system, and directing them to the lesion site. This recruitment is an essential element for neuronal reorganization. This Mus musculus (Mouse) protein is C-X-C motif chemokine 10 (Cxcl10).